The primary structure comprises 330 residues: MKVFYDSDFKLDALKEKTIAVIGYGSQGRAQSLNMKDSGLNVVVGLRKNGASWENAKADGHNVMTIEEAAEKADIIHILIPDELQAEVYDAQIKPCLKEGKTLSFSHGFNIHYGFIVPPKGVNVVLVAPKSPGKMVRRTYEEGFGVPGLICIEIDATNNAFDIVSAMAKGIGLSRAGVIQTTFKEETETDLFGEQAVLCGGVTELIKAGFETLVEAGYAPEMAYFETCHELKLIVDLIYQKGFKNMWNDVSNTAEYGGLTRRSRIVTADSKAAMKEILKEIQDGRFTKEFVLEKQVNHAHLKAMRRIEGELQIEEVGAKLRKMCGLEKEE.

Residues 1 to 181 (MKVFYDSDFK…GLSRAGVIQT (181 aa)) enclose the KARI N-terminal Rossmann domain. Residues 24-27 (YGSQ), arginine 47, serine 52, and 82-85 (DELQ) contribute to the NADP(+) site. The active site involves histidine 107. Glycine 133 contributes to the NADP(+) binding site. The 146-residue stretch at 182–327 (TFKEETETDL…AKLRKMCGLE (146 aa)) folds into the KARI C-terminal knotted domain. Mg(2+) is bound by residues aspartate 190, glutamate 194, glutamate 226, and glutamate 230. Residue serine 251 coordinates substrate.

This sequence belongs to the ketol-acid reductoisomerase family. The cofactor is Mg(2+).

The enzyme catalyses (2R)-2,3-dihydroxy-3-methylbutanoate + NADP(+) = (2S)-2-acetolactate + NADPH + H(+). It carries out the reaction (2R,3R)-2,3-dihydroxy-3-methylpentanoate + NADP(+) = (S)-2-ethyl-2-hydroxy-3-oxobutanoate + NADPH + H(+). Its pathway is amino-acid biosynthesis; L-isoleucine biosynthesis; L-isoleucine from 2-oxobutanoate: step 2/4. It functions in the pathway amino-acid biosynthesis; L-valine biosynthesis; L-valine from pyruvate: step 2/4. Involved in the biosynthesis of branched-chain amino acids (BCAA). Catalyzes an alkyl-migration followed by a ketol-acid reduction of (S)-2-acetolactate (S2AL) to yield (R)-2,3-dihydroxy-isovalerate. In the isomerase reaction, S2AL is rearranged via a Mg-dependent methyl migration to produce 3-hydroxy-3-methyl-2-ketobutyrate (HMKB). In the reductase reaction, this 2-ketoacid undergoes a metal-dependent reduction by NADPH to yield (R)-2,3-dihydroxy-isovalerate. The polypeptide is Ketol-acid reductoisomerase (NADP(+)) (Methanococcus maripaludis (strain C6 / ATCC BAA-1332)).